The chain runs to 429 residues: MKNTYNLRSITAKAINQVLDQGQSLSTVLPKLQQNITDKDKPLLQELSFGVLRVLPQLEWIIGQLMVKPLKGKQRILHYLLMVGIYQLAYTRIPAHAALAETVNGAVTLKHSQLKGLINGVLRQFQRQQLQLMECTQNNSSHHLHPEWLLTRIQKAYPQQWQQLINANNKKPPMWLRVNRIYHSRDEYLTLLRKSGIDAEPAPKSPSAIRIISPCPVTILPGFDKGWVTVQDLSAQECVELLKPINGEKILDLCAAPGGKTTYILEIAPESQVVAVDIDEQRIKRVKENLKRLNCHATVKTGDGRHPEHWAENQQFDRILLDAPCSATGVIRRHPDIKWLRREEDIAQLVQLQSEILDAIWPYLKKSGTLVYATCSILPDENCQQISSFLKRHSDAKLAGTETNDCLGKQIIPELNGGDGFFYARLTKR.

S-adenosyl-L-methionine-binding positions include 254 to 260 (CAAPGGK), Asp277, Asp303, and Asp322. Cys375 serves as the catalytic Nucleophile.

This sequence belongs to the class I-like SAM-binding methyltransferase superfamily. RsmB/NOP family.

The protein resides in the cytoplasm. It carries out the reaction cytidine(967) in 16S rRNA + S-adenosyl-L-methionine = 5-methylcytidine(967) in 16S rRNA + S-adenosyl-L-homocysteine + H(+). In terms of biological role, specifically methylates the cytosine at position 967 (m5C967) of 16S rRNA. The protein is Ribosomal RNA small subunit methyltransferase B of Photorhabdus laumondii subsp. laumondii (strain DSM 15139 / CIP 105565 / TT01) (Photorhabdus luminescens subsp. laumondii).